We begin with the raw amino-acid sequence, 165 residues long: MNSLENLILVGVIKSCHGIKGHVILKSFTEPATKILAKNLVNESREDIHIQLISQNAKGELICRFNDITTRNEAENLKGYKIFCLRASLPEPAEDEFYIADLNHLPVLDPNHKEIGKIKNILNFGAGDIIEIEFLDQTTELLPFNKEFFPVITKDYVTLNYQRGV.

A PRC barrel domain is found at 94–163 (EDEFYIADLN…KDYVTLNYQR (70 aa)).

The protein belongs to the RimM family. In terms of assembly, binds ribosomal protein uS19.

It localises to the cytoplasm. An accessory protein needed during the final step in the assembly of 30S ribosomal subunit, possibly for assembly of the head region. Essential for efficient processing of 16S rRNA. May be needed both before and after RbfA during the maturation of 16S rRNA. It has affinity for free ribosomal 30S subunits but not for 70S ribosomes. This Rickettsia akari (strain Hartford) protein is Ribosome maturation factor RimM.